Consider the following 232-residue polypeptide: Mediator of RNA polymerase II transcription subunit 18 (232 aa).

Belongs to the Mediator complex subunit 18 family. Component of the Mediator complex.

The protein localises to the nucleus. Its function is as follows. Component of the Mediator complex, a coactivator involved in the regulated transcription of nearly all RNA polymerase II-dependent genes. Mediator functions as a bridge to convey information from gene-specific regulatory proteins to the basal RNA polymerase II transcription machinery. Mediator is recruited to promoters by direct interactions with regulatory proteins and serves as a scaffold for the assembly of a functional preinitiation complex with RNA polymerase II and the general transcription factors. The sequence is that of Mediator of RNA polymerase II transcription subunit 18 (mdt-18) from Caenorhabditis elegans.